The chain runs to 374 residues: Mitochondrial import inner membrane translocase subunit tim50 (374 aa).

The transit peptide at Met1 to Ser48 directs the protein to the mitochondrion. Residues Thr42–Lys97 are disordered. Basic and acidic residues-rich tracts occupy residues Pro49 to Glu72 and Glu81 to Lys93. Residues Ile103 to Thr125 traverse the membrane as a helical segment. One can recognise an FCP1 homology domain in the interval Pro191–Phe332.

Belongs to the TIM50 family. In terms of assembly, component of the mitochondrial import inner membrane translocase complex.

Its subcellular location is the mitochondrion inner membrane. Component of the mitochondrial import inner membrane translocase that mediates the translocation of transit peptide-containing proteins across the mitochondrial inner membrane. The chain is Mitochondrial import inner membrane translocase subunit tim50 (timm50) from Dictyostelium discoideum (Social amoeba).